The following is a 99-amino-acid chain: Aspartyl/glutamyl-tRNA(Asn/Gln) amidotransferase subunit C (99 aa).

This sequence belongs to the GatC family. Heterotrimer of A, B and C subunits.

It carries out the reaction L-glutamyl-tRNA(Gln) + L-glutamine + ATP + H2O = L-glutaminyl-tRNA(Gln) + L-glutamate + ADP + phosphate + H(+). The enzyme catalyses L-aspartyl-tRNA(Asn) + L-glutamine + ATP + H2O = L-asparaginyl-tRNA(Asn) + L-glutamate + ADP + phosphate + 2 H(+). Its function is as follows. Allows the formation of correctly charged Asn-tRNA(Asn) or Gln-tRNA(Gln) through the transamidation of misacylated Asp-tRNA(Asn) or Glu-tRNA(Gln) in organisms which lack either or both of asparaginyl-tRNA or glutaminyl-tRNA synthetases. The reaction takes place in the presence of glutamine and ATP through an activated phospho-Asp-tRNA(Asn) or phospho-Glu-tRNA(Gln). This chain is Aspartyl/glutamyl-tRNA(Asn/Gln) amidotransferase subunit C, found in Burkholderia ambifaria (strain MC40-6).